The sequence spans 318 residues: Na(+)-translocating ferredoxin:NAD(+) oxidoreductase complex subunit D (318 aa).

The next 3 membrane-spanning stretches (helical) occupy residues 35-55 (LAVAGYVFGLWALALVAICVI), 77-99 (WSAVVTGVLLAFNLPINAPWWIG), and 114-134 (FGGLGQNFINPALAARAFLLA). Residue Thr156 is modified to FMN phosphoryl threonine. A run of 3 helical transmembrane segments spans residues 182 to 202 (VYGCIGEISALALLIGGLYLI), 206 to 226 (IISWRIPTIYLLTIAIFALLV), and 261 to 281 (IIYAIGCGLITMIIRLYGGYP).

This sequence belongs to the NqrB/RnfD family. As to quaternary structure, the complex is composed of six subunits: RnfA, RnfB, RnfC, RnfD, RnfE and RnfG. The cofactor is FMN.

It is found in the cell membrane. It catalyses the reaction 2 reduced [2Fe-2S]-[ferredoxin] + Na(+)(in) + NAD(+) + H(+) = 2 oxidized [2Fe-2S]-[ferredoxin] + Na(+)(out) + NADH. Part of a membrane-bound complex that couples electron transfer with translocation of ions across the membrane. Couples electron transfer from reduced ferredoxin to NAD(+) with electrogenic movement of Na(+) out of the cell. Involved in caffeate respiration. The sequence is that of Na(+)-translocating ferredoxin:NAD(+) oxidoreductase complex subunit D from Acetobacterium woodii (strain ATCC 29683 / DSM 1030 / JCM 2381 / KCTC 1655 / WB1).